Reading from the N-terminus, the 504-residue chain is WD repeat-containing protein 55 homolog (504 aa).

Acidic residues predominate over residues 32–49 (QEVVNESDSEIGEYDLGD). The segment at 32–135 (QEVVNESDSE…NAFDMDEDDE (104 aa)) is disordered. Over residues 66-76 (DSISSDGSFNP) the composition is skewed to polar residues. Positions 77–95 (NDEDSDTDSDDSMLDEPDE) are enriched in acidic residues. The span at 114–124 (SGSSNRNQDSD) shows a compositional bias: polar residues. WD repeat units lie at residues 158-197 (KLEDFITDICFHPERHIIALATIIGDVHLYEYSNEENKLL), 202-241 (VHAKACRDVEFTEDGRSLITCSKDKSVMITDMETEKLKKL), 245-283 (AHDDAINKLLVLDERLFASGDDSGTVKLWDFRTKDSIFE), 286-325 (EIEDQVTQMITNDQKKLLLATSADGYLTTFNIGARKLYVQ), 328-367 (PYEEELNCMGIYRGNSKLVVGTSKGRLYSYNWGYFGYHCD), and 412-451 (QHNMPIESMDINTNGELLASSSHNNDVRFWNVKYFEDFGD). Residues 484–504 (AKEDNNDNENDDATAGPSNTT) form a disordered region.

Belongs to the WD repeat WDR55 family.

This chain is WD repeat-containing protein 55 homolog, found in Drosophila willistoni (Fruit fly).